Consider the following 151-residue polypeptide: Transcriptional repressor NrdR (151 aa).

Residues 3–34 (CPKCGSLNDKVLETRQSKEGVVIKRRRECLNC) fold into a zinc finger. The region spanning 49–139 (IEVIKKNNTV…VFDGFEDIKD (91 aa)) is the ATP-cone domain.

Belongs to the NrdR family. Requires Zn(2+) as cofactor.

Functionally, negatively regulates transcription of bacterial ribonucleotide reductase nrd genes and operons by binding to NrdR-boxes. This is Transcriptional repressor NrdR from Sulfurihydrogenibium sp. (strain YO3AOP1).